We begin with the raw amino-acid sequence, 185 residues long: Der GTPase-activating protein YihI (185 aa).

2 disordered regions span residues Met-1 to Ile-74 and Glu-145 to Glu-169. Basic and acidic residues predominate over residues Asn-23–Glu-33. Basic residues predominate over residues Arg-34–Ser-47. Residues Arg-48–Leu-68 are compositionally biased toward basic and acidic residues. Residues Glu-145–Glu-155 show a composition bias toward acidic residues.

Belongs to the YihI family. In terms of assembly, interacts with Der.

In terms of biological role, a GTPase-activating protein (GAP) that modifies Der/EngA GTPase function. May play a role in ribosome biogenesis. The protein is Der GTPase-activating protein YihI of Vibrio atlanticus (strain LGP32) (Vibrio splendidus (strain Mel32)).